The following is a 113-amino-acid chain: U11-theraphotoxin-Hhn1a (113 aa).

The first 21 residues, 1 to 21, serve as a signal peptide directing secretion; it reads MNTVRVTFLLVFVLAVSLGQA. A propeptide spanning residues 22–74 is cleaved from the precursor; it reads DKDENRMEMQEKTEQGKSYLDFAENLLLQKLEELEAKLLEEDSEESRNSRQKR. The disordered stretch occupies residues 61-83; sequence EEDSEESRNSRQKRCIGEGVPCD. 3 cysteine pairs are disulfide-bonded: Cys75/Cys90, Cys82/Cys95, and Cys89/Cys110.

The protein belongs to the neurotoxin 14 (magi-1) family. 01 (HNTX-16) subfamily. In terms of tissue distribution, expressed by the venom gland.

It localises to the secreted. Its function is as follows. Probable ion channel inhibitor. The sequence is that of U11-theraphotoxin-Hhn1a from Cyriopagopus hainanus (Chinese bird spider).